Consider the following 123-residue polypeptide: Ribonuclease P protein component (123 aa).

It belongs to the RnpA family. Consists of a catalytic RNA component (M1 or rnpB) and a protein subunit.

It carries out the reaction Endonucleolytic cleavage of RNA, removing 5'-extranucleotides from tRNA precursor.. RNaseP catalyzes the removal of the 5'-leader sequence from pre-tRNA to produce the mature 5'-terminus. It can also cleave other RNA substrates such as 4.5S RNA. The protein component plays an auxiliary but essential role in vivo by binding to the 5'-leader sequence and broadening the substrate specificity of the ribozyme. The sequence is that of Ribonuclease P protein component from Bordetella petrii (strain ATCC BAA-461 / DSM 12804 / CCUG 43448).